A 241-amino-acid chain; its full sequence is Uridylate kinase (241 aa).

An ATP-binding site is contributed by 13-16 (KVSG). Position 55 (Gly55) interacts with UMP. Positions 56 and 60 each coordinate ATP. Residues Asp75 and 136–143 (TGNPFFTT) contribute to the UMP site. ATP is bound by residues Thr163, Gln164, Tyr169, and Asp172.

It belongs to the UMP kinase family. As to quaternary structure, homohexamer.

It localises to the cytoplasm. The catalysed reaction is UMP + ATP = UDP + ADP. It functions in the pathway pyrimidine metabolism; CTP biosynthesis via de novo pathway; UDP from UMP (UMPK route): step 1/1. Its activity is regulated as follows. Inhibited by UTP. Its function is as follows. Catalyzes the reversible phosphorylation of UMP to UDP. This Parvibaculum lavamentivorans (strain DS-1 / DSM 13023 / NCIMB 13966) protein is Uridylate kinase.